Reading from the N-terminus, the 352-residue chain is MIRQAIARVVEGQNLKESDMIEVMNQIMGGEATPAQIGALIVALRMKGETVEEITGAARVMRDHATPVRVGRVLDIDREEINLDQETMAAVLDTCGTGGSGTKSFNISTTVAFVVAACGVKVAKHGNRSVSSMCGSADVLEALGVHLDIGVDTVERCIAEEGIGFLFAPALHGAMRYAIGPRREIGIRTIFNILGPLTNPAGADRQVLGVYREDLVATLADVLCRLGCRRGFVVHGMDGMDEVTLTAPTRIADIREGRYSLSTIAPEDYGLQRCRLEDLAGGDARHNAELVRGILAGEAGPRRDIVLLNSAFALVAAGKADSIEDGMRAAAQAIDEHAALAKLNALIRMTQP.

5-phospho-alpha-D-ribose 1-diphosphate-binding positions include Gly96, 99–100 (GS), Ser104, 106–109 (NIST), 124–132 (KHGNRSVSS), and Ser136. Position 96 (Gly96) interacts with anthranilate. Position 108 (Ser108) interacts with Mg(2+). Asn127 is a binding site for anthranilate. Arg182 provides a ligand contact to anthranilate. Residues Asp241 and Glu242 each coordinate Mg(2+).

The protein belongs to the anthranilate phosphoribosyltransferase family. In terms of assembly, homodimer. It depends on Mg(2+) as a cofactor.

It catalyses the reaction N-(5-phospho-beta-D-ribosyl)anthranilate + diphosphate = 5-phospho-alpha-D-ribose 1-diphosphate + anthranilate. It participates in amino-acid biosynthesis; L-tryptophan biosynthesis; L-tryptophan from chorismate: step 2/5. Functionally, catalyzes the transfer of the phosphoribosyl group of 5-phosphorylribose-1-pyrophosphate (PRPP) to anthranilate to yield N-(5'-phosphoribosyl)-anthranilate (PRA). The chain is Anthranilate phosphoribosyltransferase from Syntrophotalea carbinolica (strain DSM 2380 / NBRC 103641 / GraBd1) (Pelobacter carbinolicus).